Reading from the N-terminus, the 443-residue chain is ATP synthase subunit b-delta (443 aa).

Residues 1–168 (MSTFIGQLIG…PSDAALDDAV (168 aa)) are ATP synthase subunit b. A helical transmembrane segment spans residues 4–24 (FIGQLIGFAVIVFLLVRFVVP). The ATP synthase subunit delta stretch occupies residues 169 to 443 (GSRMRSTSRE…LASAETQLPD (275 aa)).

The protein in the N-terminal section; belongs to the ATPase B chain family. In the C-terminal section; belongs to the ATPase delta chain family. As to quaternary structure, F-type ATPases have 2 components, F(1) - the catalytic core - and F(0) - the membrane proton channel. F(1) has five subunits: alpha(3), beta(3), gamma(1), delta(1), epsilon(1). F(0) has three main subunits: a(1), b(2) and c(10-14). The alpha and beta chains form an alternating ring which encloses part of the gamma chain. F(1) is attached to F(0) by a central stalk formed by the gamma and epsilon chains, while a peripheral stalk is formed by the delta and b chains.

The protein localises to the cell membrane. Functionally, f(1)F(0) ATP synthase produces ATP from ADP in the presence of a proton or sodium gradient. F-type ATPases consist of two structural domains, F(1) containing the extramembraneous catalytic core and F(0) containing the membrane proton channel, linked together by a central stalk and a peripheral stalk. During catalysis, ATP synthesis in the catalytic domain of F(1) is coupled via a rotary mechanism of the central stalk subunits to proton translocation. In terms of biological role, this fusion protein includes a component of the F(0) channel (subunit b) and of the F(1) subunit (subunit delta). Two copies of subunit b and one of delta together form the peripheral 'stator' stalk which links F(1) to F(0). The chain is ATP synthase subunit b-delta (atpFH) from Mycobacterium sp. (strain JLS).